The chain runs to 187 residues: GTP cyclohydrolase 1 (187 aa).

3 residues coordinate Zn(2+): Cys79, His82, and Cys150.

It belongs to the GTP cyclohydrolase I family. In terms of assembly, toroid-shaped homodecamer, composed of two pentamers of five dimers.

It catalyses the reaction GTP + H2O = 7,8-dihydroneopterin 3'-triphosphate + formate + H(+). Its pathway is cofactor biosynthesis; 7,8-dihydroneopterin triphosphate biosynthesis; 7,8-dihydroneopterin triphosphate from GTP: step 1/1. The polypeptide is GTP cyclohydrolase 1 (Fusobacterium nucleatum subsp. nucleatum (strain ATCC 25586 / DSM 15643 / BCRC 10681 / CIP 101130 / JCM 8532 / KCTC 2640 / LMG 13131 / VPI 4355)).